The sequence spans 406 residues: Tyrosine--tRNA ligase (406 aa).

Tyr35 provides a ligand contact to L-tyrosine. The short motif at 40-49 is the 'HIGH' region element; the sequence is PTADSLHIGH. L-tyrosine is bound by residues Tyr168 and Gln172. Residues 228–232 carry the 'KMSKS' region motif; sequence KMGKT. Residue Lys231 participates in ATP binding. One can recognise an S4 RNA-binding domain in the interval 340 to 406; the sequence is CSVVELLVDI…KKNYNRIIIK (67 aa).

The protein belongs to the class-I aminoacyl-tRNA synthetase family. TyrS type 1 subfamily. Homodimer.

The protein resides in the cytoplasm. The enzyme catalyses tRNA(Tyr) + L-tyrosine + ATP = L-tyrosyl-tRNA(Tyr) + AMP + diphosphate + H(+). Its function is as follows. Catalyzes the attachment of tyrosine to tRNA(Tyr) in a two-step reaction: tyrosine is first activated by ATP to form Tyr-AMP and then transferred to the acceptor end of tRNA(Tyr). The chain is Tyrosine--tRNA ligase from Clostridium kluyveri (strain NBRC 12016).